Reading from the N-terminus, the 493-residue chain is Beta-amyrin 11-oxidase (493 aa).

The chain crosses the membrane as a helical span at residues 7–23 (CMSAATLLVCYIFGSKF). Cys439 lines the heme pocket.

Belongs to the cytochrome P450 family. Heme serves as cofactor. Expressed in roots and stolons. Not detected in leaves and stems.

It is found in the membrane. The catalysed reaction is beta-amyrin + 2 reduced [NADPH--hemoprotein reductase] + 2 O2 = 11-oxo-beta-amyrin + 2 oxidized [NADPH--hemoprotein reductase] + 3 H2O + 2 H(+). It catalyses the reaction beta-amyrin + reduced [NADPH--hemoprotein reductase] + O2 = 11alpha-hydroxy-beta-amyrin + oxidized [NADPH--hemoprotein reductase] + H2O + H(+). The enzyme catalyses 11alpha-hydroxy-beta-amyrin + reduced [NADPH--hemoprotein reductase] + O2 = 11-oxo-beta-amyrin + oxidized [NADPH--hemoprotein reductase] + 2 H2O + H(+). Its function is as follows. Involved in the biosynthesis of Glycyrrhetinic acid (GA), a natural product which exhibits anti-inflammatory activity. Catalyzes 2 successive oxidations of beta-amyrin, producing a precursor of the triterpene sweetener glycyrrhizin. Unable to use 11-deoxoglycyrrhetinic acid or ent-kaurenoic acid as substrates. The sequence is that of Beta-amyrin 11-oxidase from Glycyrrhiza uralensis (Chinese licorice).